The following is a 332-amino-acid chain: Methylthioribose-1-phosphate isomerase (332 aa).

Substrate is bound by residues 44-46, Arg-87, and Gln-192; that span reads RGA. Asp-233 acts as the Proton donor in catalysis. Residue 243 to 244 participates in substrate binding; it reads NK.

Belongs to the eIF-2B alpha/beta/delta subunits family. MtnA subfamily.

It carries out the reaction 5-(methylsulfanyl)-alpha-D-ribose 1-phosphate = 5-(methylsulfanyl)-D-ribulose 1-phosphate. It participates in amino-acid biosynthesis; L-methionine biosynthesis via salvage pathway; L-methionine from S-methyl-5-thio-alpha-D-ribose 1-phosphate: step 1/6. Its function is as follows. Catalyzes the interconversion of methylthioribose-1-phosphate (MTR-1-P) into methylthioribulose-1-phosphate (MTRu-1-P). In Dehalococcoides mccartyi (strain ATCC BAA-2100 / JCM 16839 / KCTC 5957 / BAV1), this protein is Methylthioribose-1-phosphate isomerase.